Consider the following 285-residue polypeptide: Golgi phosphoprotein 3-like (285 aa).

Residues 1–39 (MTTLTHRARRTEVGKNSEKKVESEENVNQDRNQDNEDIG) form a disordered region. A compositionally biased stretch (basic and acidic residues) spans 10–23 (RTEVGKNSEKKVES). A 1,2-diacyl-sn-glycero-3-phospho-(1D-myo-inositol 4-phosphate) is bound by residues Trp67 and Arg76. Ser112 is modified (phosphoserine). A 1,2-diacyl-sn-glycero-3-phospho-(1D-myo-inositol 4-phosphate)-binding residues include Arg157 and Arg160. A beta-hairpin required for oligomerization region spans residues 176 to 187 (EKQNFLLFDMTT).

The protein belongs to the GOLPH3/VPS74 family. Homooligomer. Does not interact MYO18; differs from GOLPH3 by its inability to interact with MYO18. May interact with ARF1.

It localises to the golgi apparatus. The protein resides in the golgi stack membrane. Its subcellular location is the trans-Golgi network membrane. In terms of biological role, phosphatidylinositol-4-phosphate-binding protein that may antagonize the action of GOLPH3 which is required for the process of vesicle budding at the Golgi and anterograde transport to the plasma membrane. The protein is Golgi phosphoprotein 3-like (GOLPH3L) of Bos taurus (Bovine).